A 454-amino-acid chain; its full sequence is Oxygen-dependent coproporphyrinogen-III oxidase, mitochondrial (454 aa).

Residues 1–110 constitute a mitochondrion transit peptide; it reads MALQLGRLSS…MLPKTSGTRA (110 aa). The interval 43–70 is disordered; sequence AAGRVCRPPGPAGTEQSRGLGHGSTSRG. Position 112 is a phosphoserine (S112). The tract at residues 193–202 is important for dimerization; sequence VLQDGCVFEK. Residue S244 participates in coproporphyrinogen III binding. Residue H258 is the Proton donor of the active site. 260–262 is a coproporphyrinogen III binding site; it reads NYR. An important for dimerization region spans residues 392 to 428; it reads YVEFNLLYDRGTKFGLFTPGSRIESILMSLPLTARWE. At K404 the chain carries N6-acetyllysine; alternate. K404 carries the N6-succinyllysine; alternate modification. 411-413 is a coproporphyrinogen III binding site; that stretch reads GSR.

Belongs to the aerobic coproporphyrinogen-III oxidase family. Homodimer.

Its subcellular location is the mitochondrion intermembrane space. It carries out the reaction coproporphyrinogen III + O2 + 2 H(+) = protoporphyrinogen IX + 2 CO2 + 2 H2O. It participates in porphyrin-containing compound metabolism; protoporphyrin-IX biosynthesis; protoporphyrinogen-IX from coproporphyrinogen-III (O2 route): step 1/1. In terms of biological role, catalyzes the aerobic oxidative decarboxylation of propionate groups of rings A and B of coproporphyrinogen-III to yield the vinyl groups in protoporphyrinogen-IX and participates to the sixth step in the heme biosynthetic pathway. The protein is Oxygen-dependent coproporphyrinogen-III oxidase, mitochondrial of Homo sapiens (Human).